A 1677-amino-acid chain; its full sequence is ELMO domain-containing protein E (1677 aa).

14 disordered regions span residues 112–139, 168–194, 264–372, 592–625, 775–801, 888–947, 982–1002, 1047–1075, 1122–1141, 1197–1248, 1261–1404, 1434–1454, 1467–1593, and 1654–1677; these read TTTS…SSPS, NSKD…SNIK, QLHG…NTTE, DDDN…RSNS, PNSN…STNN, INKN…NQDI, KIRS…SQPE, STNN…ETRS, KQKS…GNVS, NNNI…DNHA, DDDD…RKKR, SPGS…PQPE, KNPE…GDVS, and ESQR…SSSK. Low complexity-rich tracts occupy residues 115–139 and 172–194; these read SSSS…SSPS and TNNS…SNIK. Residues 269–278 show a composition bias toward gly residues; sequence SIGGGGGGSG. Composition is skewed to low complexity over residues 307–334, 341–352, and 597–616; these read SQSN…KPNN, TTTTTTTTTTTS, and NNNN…NNYN. One can recognise an ELMO domain in the interval 492–710; sequence SHQILLSDLW…HTREIIEKVC (219 aa). Positions 891–903 are enriched in gly residues; the sequence is NGGGGGGGGGGGV. Residues 922-933 are compositionally biased toward acidic residues; the sequence is IDDSDDENDNDE. Composition is skewed to low complexity over residues 934 to 946 and 985 to 996; these read VNNN…INQD and SSSSTPDTSSPP. A coiled-coil region spans residues 1186–1212; sequence LLDDVLDLNQTNNNIDNENDDINEAII. The span at 1228 to 1238 shows a compositional bias: acidic residues; it reads EEEEEEEEEEE. Residues 1285–1305 are compositionally biased toward low complexity; that stretch reads NNTTTTTTTTTTTTTTTTNTT. Residues 1306-1334 are compositionally biased toward polar residues; sequence GQKRISILSTDTNRPGSSNYGESSLSNGS. Residues 1387–1397 are compositionally biased toward acidic residues; the sequence is DDEDDEDDDDK. The segment covering 1445 to 1454 has biased composition (polar residues); that stretch reads PHLSVSPQPE. Composition is skewed to low complexity over residues 1475 to 1488, 1503 to 1574, and 1663 to 1677; these read LSSS…PLLS, SNLI…PSSS, and ASSS…SSSK.

In Dictyostelium discoideum (Social amoeba), this protein is ELMO domain-containing protein E (elmoE).